The following is a 331-amino-acid chain: Ribosomal RNA small subunit methyltransferase H (331 aa).

S-adenosyl-L-methionine-binding positions include 38–40 (GGY), D56, F83, D100, and Q107. The interval 287–331 (DEAELAENPRARSARLRVGVRTDAPAGKVDPQALGTPLIPKKGRR) is disordered.

This sequence belongs to the methyltransferase superfamily. RsmH family.

It localises to the cytoplasm. It carries out the reaction cytidine(1402) in 16S rRNA + S-adenosyl-L-methionine = N(4)-methylcytidine(1402) in 16S rRNA + S-adenosyl-L-homocysteine + H(+). In terms of biological role, specifically methylates the N4 position of cytidine in position 1402 (C1402) of 16S rRNA. In Cereibacter sphaeroides (strain KD131 / KCTC 12085) (Rhodobacter sphaeroides), this protein is Ribosomal RNA small subunit methyltransferase H.